We begin with the raw amino-acid sequence, 156 residues long: ATP synthase subunit b (156 aa).

Residues 12–32 (VAFLIFVLFCMKYVWPPVITA) traverse the membrane as a helical segment.

It belongs to the ATPase B chain family. In terms of assembly, F-type ATPases have 2 components, F(1) - the catalytic core - and F(0) - the membrane proton channel. F(1) has five subunits: alpha(3), beta(3), gamma(1), delta(1), epsilon(1). F(0) has three main subunits: a(1), b(2) and c(10-14). The alpha and beta chains form an alternating ring which encloses part of the gamma chain. F(1) is attached to F(0) by a central stalk formed by the gamma and epsilon chains, while a peripheral stalk is formed by the delta and b chains.

The protein resides in the cell inner membrane. Functionally, f(1)F(0) ATP synthase produces ATP from ADP in the presence of a proton or sodium gradient. F-type ATPases consist of two structural domains, F(1) containing the extramembraneous catalytic core and F(0) containing the membrane proton channel, linked together by a central stalk and a peripheral stalk. During catalysis, ATP synthesis in the catalytic domain of F(1) is coupled via a rotary mechanism of the central stalk subunits to proton translocation. In terms of biological role, component of the F(0) channel, it forms part of the peripheral stalk, linking F(1) to F(0). This is ATP synthase subunit b from Pseudomonas putida (strain ATCC 47054 / DSM 6125 / CFBP 8728 / NCIMB 11950 / KT2440).